The following is a 227-amino-acid chain: Max dimerization protein 1 (227 aa).

Residues 21 to 48 (RREREAEHGYASMLPYSKDRDAFKRRNK) carry the Nuclear localization signal motif. Disordered regions lie at residues 30–66 (YASMLPYSKDRDAFKRRNKPKKNSTSSRSTHNEMEKN), 142–161 (MDSVGSVVSSERSDSDREEL), and 184–227 (GWSS…GLGL). The bHLH domain occupies 55–107 (SSRSTHNEMEKNRRAHLRLCLEKLKGLVPLGPESSRHTTLSLLTKAKLHIKKL). A compositionally biased stretch (polar residues) spans 198–211 (MQSLGSDEGYSSAT). Positions 216–227 (KLQDGHKAGLGL) are enriched in basic and acidic residues.

Heterodimer with MAX; the interaction is required for DNA-binding. DNA binding requires dimerization with another bHLH protein; does not form homodimers, and does not bind to DNA in the absence of MAX in vitro. Interacts with RNF17. Ubiquitinated by BIRC2/c-IAP1, leading to its subsequent degradation by the proteasome.

The protein resides in the nucleus. Its function is as follows. Component of a transcriptional repressor complex together with MAX. In complex with MAX binds to the core DNA sequence 5'-CAC[GA]TG-3'. Antagonizes MYC transcriptional activity by competing with MYC for MAX binding. Binds to the TERT promoter and represses telomerase expression, possibly by interfering with MYC binding. This Mus musculus (Mouse) protein is Max dimerization protein 1 (Mxd1).